The chain runs to 203 residues: MKLRWFAFLVVLLAGCATKRDYENPPWNAKVPVQRAMQWMPISQKAGAAWNVDPQLITAIIAIESGGNPNAVSKSNAVGLMQLKASTSGRDVYRRMGWSGEPTTSELKNPERNISMGAAYLNILETGPLAGIKDPQVLQYALVVSYANGAGALLRTFSSDRKKAITKINDLSADEFFDHVAKNHPAPQAPRYIWKLQRALDEM.

An N-terminal signal peptide occupies residues 1–15 (MKLRWFAFLVVLLAG). Cys16 carries the N-palmitoyl cysteine lipid modification. A lipid anchor (S-diacylglycerol cysteine) is attached at Cys16.

This sequence belongs to the transglycosylase Slt family.

The protein resides in the cell outer membrane. It catalyses the reaction Endolytic cleavage of the (1-&gt;4)-beta-glycosidic linkage between N-acetylmuramic acid (MurNAc) and N-acetylglucosamine (GlcNAc) residues in peptidoglycan with concomitant formation of a 1,6-anhydrobond in the MurNAc residue.. Murein-degrading enzyme. May play a role in recycling of muropeptides during cell elongation and/or cell division. Preferentially cleaves at a distance of more than two disaccharide units from the ends of the glycan chain. The chain is Endo-type membrane-bound lytic murein transglycosylase A from Escherichia fergusonii (strain ATCC 35469 / DSM 13698 / CCUG 18766 / IAM 14443 / JCM 21226 / LMG 7866 / NBRC 102419 / NCTC 12128 / CDC 0568-73).